A 63-amino-acid polypeptide reads, in one-letter code: Anaphase-promoting complex subunit 13 (63 aa).

A disordered region spans residues 36–63 (KTDDTEETNQETQQADAETWRDLALDTQ). A compositionally biased stretch (basic and acidic residues) spans 53-63 (ETWRDLALDTQ).

It belongs to the APC13 family. As to quaternary structure, component of the anaphase promoting complex/cyclosome (APC/C) complex. In terms of tissue distribution, expressed constitutively in roots, leaves, stems, buds, flowers, and seeds.

The protein resides in the nucleus. The protein operates within protein modification; protein ubiquitination. In terms of biological role, component of the anaphase promoting complex/cyclosome (APC/C), a cell cycle-regulated E3 ubiquitin ligase that controls progression through mitosis and the G1 phase of the cell cycle. The APC/C complex acts by mediating ubiquitination and subsequent degradation of target proteins. Regulates global growth and development, including phyllotaxis and apical dominance. Required for pollen maturation. Promotes (pri) miRNA transcription of each MIR159 genes. This chain is Anaphase-promoting complex subunit 13, found in Arabidopsis thaliana (Mouse-ear cress).